The sequence spans 362 residues: Methylthioribose-1-phosphate isomerase (362 aa).

Catalysis depends on Asp252, which acts as the Proton donor.

It belongs to the eIF-2B alpha/beta/delta subunits family. MtnA subfamily.

It is found in the cytoplasm. The protein localises to the nucleus. It catalyses the reaction 5-(methylsulfanyl)-alpha-D-ribose 1-phosphate = 5-(methylsulfanyl)-D-ribulose 1-phosphate. Its pathway is amino-acid biosynthesis; L-methionine biosynthesis via salvage pathway; L-methionine from S-methyl-5-thio-alpha-D-ribose 1-phosphate: step 1/6. In terms of biological role, catalyzes the interconversion of methylthioribose-1-phosphate (MTR-1-P) into methylthioribulose-1-phosphate (MTRu-1-P). The polypeptide is Methylthioribose-1-phosphate isomerase (Drosophila mojavensis (Fruit fly)).